The sequence spans 104 residues: EPLCRRQFQQHQHLRACQRYIRRRAQRGGLVDEQRGPALRLCCNQLRQVNKPCVCPVLRQAAHQQLYQGQIEGPRQVRQLFRAARNLPNICKIPAVGRCQFTRW.

Disulfide bonds link Cys4-Cys53, Cys17-Cys42, Cys43-Cys91, and Cys55-Cys99.

The protein belongs to the 2S seed storage albumins family. As to quaternary structure, heterodimer of a small A and a large B chain linked by disulfide bonds.

Its function is as follows. 2S seed storage protein having sweetness-inducing activity. This form is not heat stable. The sequence is that of Sweet protein mabinlin-1 from Capparis masaikai (Mabinlang).